Reading from the N-terminus, the 372-residue chain is Glutamate 5-kinase (372 aa).

Residue Lys14 coordinates ATP. Residues Ser54, Asp141, and Asn153 each coordinate substrate. 173-174 contacts ATP; the sequence is TD. Residues 280–358 enclose the PUA domain; the sequence is RGHVVIDAGA…GEIEAVLGYM (79 aa).

This sequence belongs to the glutamate 5-kinase family.

It localises to the cytoplasm. The catalysed reaction is L-glutamate + ATP = L-glutamyl 5-phosphate + ADP. It participates in amino-acid biosynthesis; L-proline biosynthesis; L-glutamate 5-semialdehyde from L-glutamate: step 1/2. Catalyzes the transfer of a phosphate group to glutamate to form L-glutamate 5-phosphate. The polypeptide is Glutamate 5-kinase (Burkholderia thailandensis (strain ATCC 700388 / DSM 13276 / CCUG 48851 / CIP 106301 / E264)).